We begin with the raw amino-acid sequence, 556 residues long: Formate--tetrahydrofolate ligase (556 aa).

Thr-65–Ser-72 lines the ATP pocket.

Belongs to the formate--tetrahydrofolate ligase family.

It carries out the reaction (6S)-5,6,7,8-tetrahydrofolate + formate + ATP = (6R)-10-formyltetrahydrofolate + ADP + phosphate. Its pathway is one-carbon metabolism; tetrahydrofolate interconversion. In Clostridium botulinum (strain Alaska E43 / Type E3), this protein is Formate--tetrahydrofolate ligase.